The sequence spans 230 residues: Voltage-gated hydrogen channel 1 (230 aa).

The Cytoplasmic portion of the chain corresponds to 1–58; the sequence is MAGCLRHFTSVGDDTKKKAWKEEDVEVAHEEEPKNTPHPFIASYSFRGALKWLFSSHK. A helical transmembrane segment spans residues 59-79; that stretch reads FQIVIICLVILDALFVLVEVL. Residues 80 to 96 lie on the Extracellular side of the membrane; sequence LDLELLAEKVDHIIPEI. A helical membrane pass occupies residues 97 to 119; that stretch reads FHYLSISVLSFFILEIAGKLYAF. The Cytoplasmic portion of the chain corresponds to 120–127; sequence RLEFFHHK. Residues 128–148 traverse the membrane as a helical segment; that stretch reads FEVFDAAIVVISFIIDIVYIS. The Extracellular segment spans residues 149–155; it reads REDIFNA. The helical transmembrane segment at 156 to 176 threads the bilayer; the sequence is VGLLILLRLWRVARIVNGIIV. Residues 177-226 are a coiled coil; it reads SVKTQAEDKIHRLKENQESLLEKVAHLEQQCAQQEQEIVRLQTLLQQHNV. Over 177–230 the chain is Cytoplasmic; sequence SVKTQAEDKIHRLKENQESLLEKVAHLEQQCAQQEQEIVRLQTLLQQHNVFPAS.

It belongs to the hydrogen channel family. Homodimer.

The protein localises to the membrane. Its subcellular location is the cell membrane. Functionally, mediates the voltage-dependent proton permeability of excitable membranes. Forms a proton-selective channel through which protons may pass in accordance with their electrochemical gradient. This Xenopus tropicalis (Western clawed frog) protein is Voltage-gated hydrogen channel 1 (hvcn1).